The following is a 150-amino-acid chain: 3-dehydroquinate dehydratase (150 aa).

The active-site Proton acceptor is Tyr-26. The substrate site is built by Asn-77, His-83, and Asp-90. The active-site Proton donor is the His-103. Substrate-binding positions include 104-105 and Arg-114; that span reads LS.

The protein belongs to the type-II 3-dehydroquinase family. In terms of assembly, homododecamer.

It catalyses the reaction 3-dehydroquinate = 3-dehydroshikimate + H2O. It functions in the pathway metabolic intermediate biosynthesis; chorismate biosynthesis; chorismate from D-erythrose 4-phosphate and phosphoenolpyruvate: step 3/7. Its function is as follows. Catalyzes a trans-dehydration via an enolate intermediate. The polypeptide is 3-dehydroquinate dehydratase (Vibrio cholerae serotype O1 (strain ATCC 39541 / Classical Ogawa 395 / O395)).